The primary structure comprises 568 residues: Dual specificity tyrosine-phosphorylation-regulated kinase 3 (568 aa).

Residues 1–168 (MKWKEKLGDG…HGVIGGPNNG (168 aa)) are disordered. Over residues 77-114 (SNTVQSDGISDSEKCSPTVSQGKSSDCLNTVKSNSSSK) the composition is skewed to polar residues. The region spanning 189 to 502 (YEVLKIIGKG…PAQALRHPWI (314 aa)) is the Protein kinase domain. Residues 195-203 (IGKGSFGQV) and K218 each bind ATP. The active-site Proton acceptor is the D315. S330 carries the phosphoserine modification. Phosphotyrosine is present on Y349. Residues 448–461 (RSRRGKKRGPPGSK) carry the Nuclear localization signal motif.

Belongs to the protein kinase superfamily. CMGC Ser/Thr protein kinase family. MNB/DYRK subfamily. As to quaternary structure, interacts with SIRT1. It depends on Mg(2+) as a cofactor. Protein kinase activity is activated following autophosphorylation at Tyr-349. Autophosphorylation at Ser-330 stabilizes the protein and enhances the protein kinase activity. Post-translationally, ubiquitinated at anaphase by the anaphase-promoting complex (APC/C), leading to its degradation by the proteasome.

It is found in the nucleus. The protein localises to the cytoplasm. The protein resides in the nucleus speckle. It localises to the cytoplasmic granule. Its subcellular location is the cytoskeleton. It is found in the microtubule organizing center. The protein localises to the centrosome. It catalyses the reaction L-seryl-[protein] + ATP = O-phospho-L-seryl-[protein] + ADP + H(+). It carries out the reaction L-threonyl-[protein] + ATP = O-phospho-L-threonyl-[protein] + ADP + H(+). The enzyme catalyses L-tyrosyl-[protein] + ATP = O-phospho-L-tyrosyl-[protein] + ADP + H(+). Protein kinase activity is activated following autophosphorylation at Tyr-349. Dual-specificity protein kinase that promotes disassembly of several types of membraneless organelles during mitosis, such as stress granules, nuclear speckles and pericentriolar material. Dual-specificity tyrosine-regulated kinases (DYRKs) autophosphorylate a critical tyrosine residue in their activation loop and phosphorylate their substrate on serine and threonine residues. Acts as a central dissolvase of membraneless organelles during the G2-to-M transition, after the nuclear-envelope breakdown: acts by mediating phosphorylation of multiple serine and threonine residues in unstructured domains of proteins, such as SRRM1 and PCM1. Does not mediate disassembly of all membraneless organelles: disassembly of P-body and nucleolus is not regulated by DYRK3. Dissolution of membraneless organelles at the onset of mitosis is also required to release mitotic regulators, such as ZNF207, from liquid-unmixed organelles where they are sequestered and keep them dissolved during mitosis. Regulates mTORC1 by mediating the dissolution of stress granules: during stressful conditions, DYRK3 partitions from the cytosol to the stress granule, together with mTORC1 components, which prevents mTORC1 signaling. When stress signals are gone, the kinase activity of DYRK3 is required for the dissolution of stress granule and mTORC1 relocation to the cytosol: acts by mediating the phosphorylation of the mTORC1 inhibitor AKT1S1, allowing full reactivation of mTORC1 signaling. Also acts as a negative regulator of EPO-dependent erythropoiesis: may place an upper limit on red cell production during stress erythropoiesis. Inhibits cell death due to cytokine withdrawal in hematopoietic progenitor cells. Promotes cell survival upon genotoxic stress through phosphorylation of SIRT1: this in turn inhibits p53/TP53 activity and apoptosis. The chain is Dual specificity tyrosine-phosphorylation-regulated kinase 3 from Macaca fascicularis (Crab-eating macaque).